The following is a 374-amino-acid chain: Peptidoglycan recognition protein 4 (374 aa).

The first 20 residues, Met-1–Ser-20, serve as a signal peptide directing secretion. Asn-39, Asn-93, and Asn-146 each carry an N-linked (GlcNAc...) asparagine glycan. N-acetylmuramoyl-L-alanine amidase domains are found at residues Arg-76–Pro-212 and Pro-233–Gly-359. 3 disulfides stabilise this stretch: Cys-211–Cys-333, Cys-227–Cys-271, and Cys-247–Cys-253. Tyr-275 provides a ligand contact to peptidoglycan. Interaction with murein regions lie at residues Gln-294–Asp-303 and Asn-354–Thr-355.

It belongs to the N-acetylmuramoyl-L-alanine amidase 2 family. Homodimer; disulfide-linked. Heterodimer with PGLYRP3; disulfide-linked. As to expression, ubiquitous.

It localises to the secreted. Functionally, pattern receptor that binds to murein peptidoglycans (PGN) of Gram-positive bacteria. Has bactericidal activity towards Gram-positive bacteria. May kill Gram-positive bacteria by interfering with peptidoglycan biosynthesis. Also binds to Gram-negative bacteria, and has bacteriostatic activity towards Gram-negative bacteria. Plays a role in innate immunity. This chain is Peptidoglycan recognition protein 4 (Pglyrp4), found in Mus musculus (Mouse).